A 272-amino-acid chain; its full sequence is 1,4-dihydroxy-2-naphthoyl-CoA synthase (272 aa).

Residues Arg-33, 72–76, Tyr-84, 116–120, Thr-142, Ser-148, Tyr-245, and Lys-260 contribute to the substrate site; these read SGGDQ and YAIGG. 141 to 143 is a binding site for hydrogencarbonate; sequence QTG. A compositionally biased stretch (basic and acidic residues) spans 253-264; that stretch reads GRDAFKEKRDPD. A disordered region spans residues 253–272; it reads GRDAFKEKRDPDFDQFPKFP.

This sequence belongs to the enoyl-CoA hydratase/isomerase family. MenB subfamily. Hydrogencarbonate is required as a cofactor.

The catalysed reaction is 2-succinylbenzoyl-CoA + H(+) = 1,4-dihydroxy-2-naphthoyl-CoA + H2O. Its pathway is quinol/quinone metabolism; 1,4-dihydroxy-2-naphthoate biosynthesis; 1,4-dihydroxy-2-naphthoate from chorismate: step 6/7. The protein operates within quinol/quinone metabolism; menaquinone biosynthesis. Its function is as follows. Converts o-succinylbenzoyl-CoA (OSB-CoA) to 1,4-dihydroxy-2-naphthoyl-CoA (DHNA-CoA). The chain is 1,4-dihydroxy-2-naphthoyl-CoA synthase from Staphylococcus haemolyticus (strain JCSC1435).